Here is a 264-residue protein sequence, read N- to C-terminus: Glutamate racemase (264 aa).

Residues 10–11 and 42–43 contribute to the substrate site; these read DS and YG. The active-site Proton donor/acceptor is the cysteine 73. 74 to 75 provides a ligand contact to substrate; the sequence is NT. Cysteine 183 serves as the catalytic Proton donor/acceptor. 184–185 contributes to the substrate binding site; it reads TH.

It belongs to the aspartate/glutamate racemases family.

It catalyses the reaction L-glutamate = D-glutamate. The protein operates within cell wall biogenesis; peptidoglycan biosynthesis. Provides the (R)-glutamate required for cell wall biosynthesis. The polypeptide is Glutamate racemase (Streptococcus pyogenes serotype M4 (strain MGAS10750)).